A 1231-amino-acid chain; its full sequence is uncharacterized protein (1231 aa).

Disordered regions lie at residues 171–197, 210–259, and 389–547; these read LKPD…QHDD, DESF…HLPT, and ASPR…RSSR. The span at 440 to 450 shows a compositional bias: basic residues; the sequence is RSRHSHKRRSI. Phosphoserine is present on residues serine 449, serine 451, serine 453, and serine 455. A compositionally biased stretch (basic residues) spans 458–502; the sequence is RGGRRAVRRSRSRSPRRSYNRGSTRSRSRSMRHRSRSPAHYRGRG. The span at 503–541 shows a compositional bias: basic and acidic residues; the sequence is RGREPASKERGSSSRDFGGRHSLQRERERSSEYYHRNEG. Tyrosine 549 is subject to Phosphotyrosine. 3 disordered regions span residues 570-591, 950-981, and 1058-1203; these read KTSS…ASEP, PNLD…DDEE, and TLSK…PPFN. Phosphoserine is present on residues serine 573 and serine 589. Residue threonine 970 is modified to Phosphothreonine. Serine 972 is subject to Phosphoserine. A compositionally biased stretch (polar residues) spans 1076–1103; it reads YMMNQQHGAPNAQNAPNLGQNPGQNLGQ. The span at 1118–1127 shows a compositional bias: low complexity; that stretch reads QQQQQQQQQQ. Residues 1178–1203 are compositionally biased toward pro residues; the sequence is PPGPGGYVGPPPNPWASNVPPQPPFN.

This is an uncharacterized protein from Drosophila melanogaster (Fruit fly).